The primary structure comprises 545 residues: Monocarboxylate transporter 8 (545 aa).

The disordered stretch occupies residues 1 to 98 (MALPSPASEE…VETRGTARGF (98 aa)). Ala2 bears the N-acetylalanine mark. At 2–102 (ALPSPASEEA…GTARGFQPPE (101 aa)) the chain is on the cytoplasmic side. Tandem repeats lie at residues 29–50 (PVPEPEPEPEPEPEPDPEPVPV) and 51–72 (PPPEPQPEPEPQPLPDPAPLPE). Residues 29-72 (PVPEPEPEPEPEPEPDPEPVPVPPPEPQPEPEPQPLPDPAPLPE) form a 2 X 22 AA approximate tandem repeats region. A compositionally biased stretch (acidic residues) spans 33 to 45 (PEPEPEPEPEPDP). A compositionally biased stretch (pro residues) spans 46–70 (EPVPVPPPEPQPEPEPQPLPDPAPL). A helical membrane pass occupies residues 103–123 (GGFGWIVVFAATWCNGSIFGI). At 124–149 (HNSVGILYSMLLEEEKEKNRQVEFQA) the chain is on the extracellular side. The chain crosses the membrane as a helical span at residues 150–170 (AWVGALAMGMIFFCSPIVSIF). Residues 171-177 (TDRLGCR) are Cytoplasmic-facing. Residues 178–198 (ITATTGAAVAFIGLHTSSFTS) traverse the membrane as a helical segment. The Extracellular portion of the chain corresponds to 199–206 (SLSLRYFT). Residues 207–227 (YGILFGCGCSFAFQPSLVILG) form a helical membrane-spanning segment. At 228-235 (HYFQRRLG) the chain is on the cytoplasmic side. The helical transmembrane segment at 236–256 (LANGVVSAGSSIFSMSFPFLI) threads the bilayer. Residues 257–264 (KMLGDKIK) are Extracellular-facing. The helical transmembrane segment at 265-285 (LAQTFQVLSTFMFVLTLLSLT) threads the bilayer. Topologically, residues 286-328 (YRPLLPSSQDTPSKRGAHTLRQRFLVQFRKYFNMRVFRQRTYR) are cytoplasmic. Residues 329–349 (IWAFGIAAAALGYFVPYVHLM) form a helical membrane-spanning segment. The Extracellular segment spans residues 350–362 (KYVEDKFKEIKET). The helical transmembrane segment at 363–383 (WVLLVCIGATSGLGRLVSGHI) threads the bilayer. Residues 384–392 (SDSIPGLKK) lie on the Cytoplasmic side of the membrane. The helical transmembrane segment at 393–413 (IYLQVLSFLLLGLMSMMIPLC) threads the bilayer. Residues 414–415 (RD) are Extracellular-facing. Residues 416-436 (FGGLIVVCLFLGLCDGFFITI) traverse the membrane as a helical segment. Over 437–453 (MAPIAFELVGPMQASQA) the chain is Cytoplasmic. The helical transmembrane segment at 454 to 474 (IGYLLGMMALPMIAGPPIAGL) threads the bilayer. Residues 475–483 (LRNCFGDYH) lie on the Extracellular side of the membrane. A helical transmembrane segment spans residues 484 to 504 (VAFYFAGVPPIIGAVILFFVP). At 505–545 (LMHQRMFKKEQRDSSKDKMLSHDPDPNGELLPGSPTPEEPI) the chain is on the cytoplasmic side. Over residues 514–529 (EQRDSSKDKMLSHDPD) the composition is skewed to basic and acidic residues. Residues 514–545 (EQRDSSKDKMLSHDPDPNGELLPGSPTPEEPI) form a disordered region. Thr540 bears the Phosphothreonine mark.

It belongs to the major facilitator superfamily. Monocarboxylate porter (TC 2.A.1.13) family. As to quaternary structure, monomer. Homodimer. Homooligomer. Expressed in cerebral microvessels.

The protein resides in the cell membrane. It localises to the apical cell membrane. It catalyses the reaction 3,3',5-triiodo-L-thyronine(out) = 3,3',5-triiodo-L-thyronine(in). The enzyme catalyses 3,3',5'-triiodo-L-thyronine(out) = 3,3',5'-triiodo-L-thyronine(in). It carries out the reaction L-thyroxine(out) = L-thyroxine(in). The catalysed reaction is 3,3'-diiodo-L-thyronine(out) = 3,3'-diiodo-L-thyronine(in). Its function is as follows. Specific thyroid hormone transmembrane transporter, that mediates both uptake and efflux of thyroid hormones across the cell membrane independently of pH or a Na(+) gradient. Major substrates are the iodothyronines T3 and T4 and to a lesser extent rT3 and 3,3-diiodothyronine (3,3'-T2). Acts as an important mediator of thyroid hormone transport, especially T3, through the blood-brain barrier. The protein is Monocarboxylate transporter 8 (Slc16a2) of Mus musculus (Mouse).